We begin with the raw amino-acid sequence, 221 residues long: MLRRLVTSSLSASRSMSASVQSRVGIPFVIDNEGKGERTYDIYSRLLRDRIVCLMTPVDDFIASALIAQLLFLQSESGKKPIHMYINSPGGSVTAGLAIYDTIQMISAPVSTWVIGQASSMGSLLLCAGEKGMRSALPNSRIMVHQPSGGAQGTCSDIVIRAEEITRLKRRLNEIYVHHTGMSYDEIEKTLDRDRFMSAHEALKFGLVDQIETHNGSMPSD.

A mitochondrion-targeting transit peptide spans 1–25; it reads MLRRLVTSSLSASRSMSASVQSRVG. Serine 120 (nucleophile) is an active-site residue. The active site involves histidine 145.

It belongs to the peptidase S14 family. Tetradecamer that assembles into a two heptameric rings with a central cavity. Expressed in the intestine.

It localises to the mitochondrion matrix. It carries out the reaction Hydrolysis of proteins to small peptides in the presence of ATP and magnesium. alpha-casein is the usual test substrate. In the absence of ATP, only oligopeptides shorter than five residues are hydrolyzed (such as succinyl-Leu-Tyr-|-NHMec, and Leu-Tyr-Leu-|-Tyr-Trp, in which cleavage of the -Tyr-|-Leu- and -Tyr-|-Trp bonds also occurs).. Functionally, clp cleaves peptides in various proteins in a process that requires ATP hydrolysis. Clp may be responsible for a fairly general and central housekeeping function rather than for the degradation of specific substrates. This is ATP-dependent Clp protease proteolytic subunit 1, mitochondrial (clpp-1) from Caenorhabditis elegans.